We begin with the raw amino-acid sequence, 59 residues long: MAVQQNKKSPSKRGMHRSHDHLSVAPLAVEPTTGETHLRHHVSPNGYYRGRKVIKTKND.

The tract at residues 1–59 is disordered; that stretch reads MAVQQNKKSPSKRGMHRSHDHLSVAPLAVEPTTGETHLRHHVSPNGYYRGRKVIKTKND. 2 stretches are compositionally biased toward basic residues: residues 9-19 and 49-59; these read SPSKRGMHRSH and RGRKVIKTKND.

This sequence belongs to the bacterial ribosomal protein bL32 family.

This Cupriavidus metallidurans (strain ATCC 43123 / DSM 2839 / NBRC 102507 / CH34) (Ralstonia metallidurans) protein is Large ribosomal subunit protein bL32.